The chain runs to 725 residues: ATP-dependent zinc metalloprotease FtsH (725 aa).

Over 1–11 (MDKMKKPKINW) the chain is Cytoplasmic. Residues 12-32 (LLIVIVGIIAALLITVLVLLF) form a helical membrane-spanning segment. Residues 33 to 160 (SPKTQPKSFD…LFGQHIVQEN (128 aa)) lie on the Extracellular side of the membrane. Residues 161-181 (GFITFIKAIWFPALIAIIIFL) traverse the membrane as a helical segment. Topologically, residues 182-725 (GYKAQSRAAS…EEETLAEKAE (544 aa)) are cytoplasmic. 252 to 259 (GPPGTGKT) serves as a coordination point for ATP. Residue histidine 474 coordinates Zn(2+). The active site involves glutamate 475. Residues histidine 478 and aspartate 552 each contribute to the Zn(2+) site. The tract at residues 680–725 (QVNESQEKDKQKNAQIKEDLSKMDKKDNLTKAKDKGEEETLAEKAE) is disordered. Positions 684–725 (SQEKDKQKNAQIKEDLSKMDKKDNLTKAKDKGEEETLAEKAE) are enriched in basic and acidic residues.

In the central section; belongs to the AAA ATPase family. The protein in the C-terminal section; belongs to the peptidase M41 family. As to quaternary structure, homohexamer. Requires Zn(2+) as cofactor.

It localises to the cell membrane. Acts as a processive, ATP-dependent zinc metallopeptidase for both cytoplasmic and membrane proteins. Plays a role in the quality control of integral membrane proteins. This Mycoplasmopsis pulmonis (strain UAB CTIP) (Mycoplasma pulmonis) protein is ATP-dependent zinc metalloprotease FtsH.